Reading from the N-terminus, the 790-residue chain is Penicillin-binding protein 1A (790 aa).

The Cytoplasmic portion of the chain corresponds to 1 to 6; it reads MYKSLL. The helical; Signal-anchor for type II membrane protein transmembrane segment at 7 to 27 threads the bilayer; that stretch reads FCLKIFVFLILVGCGITAYII. The Periplasmic segment spans residues 28 to 790; that stretch reads YHYSRDLPDY…SKEDQSQEIY (763 aa). The segment at 49–220 is transglycosylase; that stretch reads TRIYSRDGKL…SELNPERNYA (172 aa). The Proton donor; for transglycosylase activity role is filled by Glu87. The transpeptidase stretch occupies residues 398-711; it reads DVIVVEAIKE…SNVVLPIFID (314 aa). Catalysis depends on Ser457, which acts as the Acyl-ester intermediate; for transpeptidase activity.

It in the N-terminal section; belongs to the glycosyltransferase 51 family. The protein in the C-terminal section; belongs to the transpeptidase family.

The protein localises to the cell inner membrane. The enzyme catalyses [GlcNAc-(1-&gt;4)-Mur2Ac(oyl-L-Ala-gamma-D-Glu-L-Lys-D-Ala-D-Ala)](n)-di-trans,octa-cis-undecaprenyl diphosphate + beta-D-GlcNAc-(1-&gt;4)-Mur2Ac(oyl-L-Ala-gamma-D-Glu-L-Lys-D-Ala-D-Ala)-di-trans,octa-cis-undecaprenyl diphosphate = [GlcNAc-(1-&gt;4)-Mur2Ac(oyl-L-Ala-gamma-D-Glu-L-Lys-D-Ala-D-Ala)](n+1)-di-trans,octa-cis-undecaprenyl diphosphate + di-trans,octa-cis-undecaprenyl diphosphate + H(+). The catalysed reaction is Preferential cleavage: (Ac)2-L-Lys-D-Ala-|-D-Ala. Also transpeptidation of peptidyl-alanyl moieties that are N-acyl substituents of D-alanine.. The protein operates within cell wall biogenesis; peptidoglycan biosynthesis. Cell wall formation. Synthesis of cross-linked peptidoglycan from the lipid intermediates. The enzyme has a penicillin-insensitive transglycosylase N-terminal domain (formation of linear glycan strands) and a penicillin-sensitive transpeptidase C-terminal domain (cross-linking of the peptide subunits). This Rickettsia conorii (strain ATCC VR-613 / Malish 7) protein is Penicillin-binding protein 1A (mrcA).